An 80-amino-acid chain; its full sequence is Secreted transmembrane peptide 3 (80 aa).

Residues 1–27 (MGLKMSSNALLLSLFLLLLCLFSEIGG) form the signal peptide. The disordered stretch occupies residues 44–80 (IATPPSLTCGGQRLGGPQPRLSPCPRPRPRPRPRTGS). An SCOOP motif motif is present at residues 62 to 80 (PRLSPCPRPRPRPRPRTGS). Basic residues predominate over residues 70–80 (PRPRPRPRTGS).

It belongs to the serine rich endogenous peptide (SCOOP) phytocytokine family. In terms of assembly, interacts with MIK2 (via extracellular leucine-rich repeat domain); this interaction triggers the formation of complex between MIK2 and the BAK1/SERK3 and SERK4 coreceptors, and subsequent BAK1 activation by phosphorylation. Mostly expressed in leaves, and, to a lower extent, in roots, stems, siliques, seeds and flowers.

The protein localises to the cell membrane. Its subcellular location is the secreted. The protein resides in the extracellular space. It is found in the apoplast. It localises to the endoplasmic reticulum. The protein localises to the golgi apparatus. Brassicaceae-specific phytocytokine (plant endogenous peptide released into the apoplast) perceived by MIK2 in a BAK1/SERK3 and SERK4 coreceptors-dependent manner, that modulates various physiological and antimicrobial processes including growth prevention and reactive oxygen species (ROS) response regulation. This Arabidopsis thaliana (Mouse-ear cress) protein is Secreted transmembrane peptide 3.